A 264-amino-acid polypeptide reads, in one-letter code: Octanoyltransferase (264 aa).

Residues Gly-74–Gln-262 form the BPL/LPL catalytic domain. Substrate-binding positions include Arg-113–His-120, Ala-193–Gly-195, and Gly-206–Ala-208. Catalysis depends on Cys-224, which acts as the Acyl-thioester intermediate.

It belongs to the LipB family.

It localises to the cytoplasm. It catalyses the reaction octanoyl-[ACP] + L-lysyl-[protein] = N(6)-octanoyl-L-lysyl-[protein] + holo-[ACP] + H(+). Its pathway is protein modification; protein lipoylation via endogenous pathway; protein N(6)-(lipoyl)lysine from octanoyl-[acyl-carrier-protein]: step 1/2. Catalyzes the transfer of endogenously produced octanoic acid from octanoyl-acyl-carrier-protein onto the lipoyl domains of lipoate-dependent enzymes. Lipoyl-ACP can also act as a substrate although octanoyl-ACP is likely to be the physiological substrate. The polypeptide is Octanoyltransferase (Brucella melitensis biotype 1 (strain ATCC 23456 / CCUG 17765 / NCTC 10094 / 16M)).